Here is an 85-residue protein sequence, read N- to C-terminus: Small ribosomal subunit protein uS15c (85 aa).

This sequence belongs to the universal ribosomal protein uS15 family. As to quaternary structure, part of the 30S ribosomal subunit.

It is found in the plastid. The protein resides in the chloroplast. In Chaetosphaeridium globosum (Charophycean green alga), this protein is Small ribosomal subunit protein uS15c (rps15).